Reading from the N-terminus, the 299-residue chain is Putative peptidyl-prolyl cis-trans isomerase jhp_0161 (299 aa).

The signal sequence occupies residues 1 to 21 (MKKNILNLALVGALSASFLMA). A PpiC domain is found at 154–253 (KQEAHARHIL…FGYHIIYLIS (100 aa)).

It carries out the reaction [protein]-peptidylproline (omega=180) = [protein]-peptidylproline (omega=0). The polypeptide is Putative peptidyl-prolyl cis-trans isomerase jhp_0161 (Helicobacter pylori (strain J99 / ATCC 700824) (Campylobacter pylori J99)).